Here is a 445-residue protein sequence, read N- to C-terminus: Maltoporin (445 aa).

The first 25 residues, 1 to 25 (MKMKAKWLPIAAGVTAALASQAAFA), serve as a signal peptide directing secretion.

The protein belongs to the porin LamB (TC 1.B.3) family. In terms of assembly, homotrimer formed of three 18-stranded antiparallel beta-barrels, containing three independent channels.

The protein localises to the cell outer membrane. The enzyme catalyses beta-maltose(in) = beta-maltose(out). Its function is as follows. Involved in the transport of maltose and maltodextrins. The chain is Maltoporin from Aeromonas salmonicida.